A 172-amino-acid polypeptide reads, in one-letter code: Cell division protein SepF (172 aa).

The interval 16 to 78 (DGDEHYEPQP…RAASNRDDSS (63 aa)) is disordered. Positions 17-48 (GDEHYEPQPEGKQTRPAQKNEEYVDQEIRHTE) are enriched in basic and acidic residues.

The protein belongs to the SepF family. As to quaternary structure, homodimer. Interacts with FtsZ.

Its subcellular location is the cytoplasm. In terms of biological role, cell division protein that is part of the divisome complex and is recruited early to the Z-ring. Probably stimulates Z-ring formation, perhaps through the cross-linking of FtsZ protofilaments. Its function overlaps with FtsA. The chain is Cell division protein SepF from Renibacterium salmoninarum (strain ATCC 33209 / DSM 20767 / JCM 11484 / NBRC 15589 / NCIMB 2235).